Reading from the N-terminus, the 289-residue chain is Diaminopimelate epimerase (289 aa).

Positions 13, 47, and 67 each coordinate substrate. Residue Cys-76 is the Proton donor of the active site. Residues 77 to 78 (GN), Asn-167, Asn-200, and 218 to 219 (ER) each bind substrate. Catalysis depends on Cys-227, which acts as the Proton acceptor. 228 to 229 (GT) lines the substrate pocket.

Belongs to the diaminopimelate epimerase family. Homodimer.

Its subcellular location is the cytoplasm. It catalyses the reaction (2S,6S)-2,6-diaminopimelate = meso-2,6-diaminopimelate. It participates in amino-acid biosynthesis; L-lysine biosynthesis via DAP pathway; DL-2,6-diaminopimelate from LL-2,6-diaminopimelate: step 1/1. In terms of biological role, catalyzes the stereoinversion of LL-2,6-diaminopimelate (L,L-DAP) to meso-diaminopimelate (meso-DAP), a precursor of L-lysine and an essential component of the bacterial peptidoglycan. The protein is Diaminopimelate epimerase of Burkholderia pseudomallei (strain 668).